We begin with the raw amino-acid sequence, 285 residues long: MTRYRDVLELHTGHPASDGAGVRLTRVIGGPSPERFDPFLMLDQFDTQNPDDYVAGFPSHPHRGFETVTYMLEGRMRHEDHLGNRGLLKPGGVQWMTAAHGIIHSEMPEQVEGAMRGFQLWVNLPAKNKLAPAGYRDIEPEDVPRLETAGGVKVTVIAGRFDDGQAQQIGAVERPDTEPHYYDLQLPAGGRIAPRLPDGHRVLLYVYEGSLTVEGERPVEIATNRLARLSEEGELSLRSEAGARVLVLAGKPLHEPIVQYGPFVMNSREEIEQALRDYRDGVLAV.

Positions 60, 62, 104, and 106 each coordinate a divalent metal cation.

Belongs to the pirin family. Requires a divalent metal cation as cofactor.

The enzyme catalyses quercetin + O2 = 2-(3,4-dihydroxybenzoyloxy)-4,6-dihydroxybenzoate + CO. The protein operates within flavonoid metabolism; quercetin degradation. In terms of biological role, putative quercetin 2,3-dioxygenase. The polypeptide is Putative quercetin 2,3-dioxygenase PA3240 (Pseudomonas aeruginosa (strain ATCC 15692 / DSM 22644 / CIP 104116 / JCM 14847 / LMG 12228 / 1C / PRS 101 / PAO1)).